We begin with the raw amino-acid sequence, 246 residues long: Acetoacetate decarboxylase (246 aa).

The active-site Schiff-base intermediate with acetoacetate is Lys116.

The protein belongs to the ADC family.

The enzyme catalyses acetoacetate + H(+) = acetone + CO2. In terms of biological role, catalyzes the conversion of acetoacetate to acetone and carbon dioxide. This Burkholderia vietnamiensis (strain G4 / LMG 22486) (Burkholderia cepacia (strain R1808)) protein is Acetoacetate decarboxylase.